Here is an 838-residue protein sequence, read N- to C-terminus: Extragenic suppressor of kinetochore protein 1 (838 aa).

Residues serine 411 and serine 418 each carry the phosphoserine modification. The interval 411-468 (SDEDDDDSTFSDKNSKDFKETEDMNGAEDMHGRAPQITKDNLNLTTTDSPMSEAEPVS) is disordered. Position 419 is a phosphothreonine (threonine 419). The span at 423–442 (KNSKDFKETEDMNGAEDMHG) shows a compositional bias: basic and acidic residues. Serine 425, serine 459, serine 468, and serine 491 each carry phosphoserine. Residues 448–460 (TKDNLNLTTTDSP) show a composition bias toward polar residues. A Phosphothreonine modification is found at threonine 493. Serine 494 is modified (phosphoserine). Residues 690 to 700 (ELESNSSDDDV) are compositionally biased toward acidic residues. Disordered regions lie at residues 690-745 (ELES…DQDN) and 757-838 (ISDN…NHGK). 2 positions are modified to phosphoserine: serine 711 and serine 713. Acidic residues predominate over residues 714-723 (NDEDDGNDED). A compositionally biased stretch (basic and acidic residues) spans 724-734 (PLSREMSRRLS). Acidic residues-rich tracts occupy residues 768 to 779 (SDEDDDDDDEVV) and 806 to 818 (SDSE…DSSD).

This sequence belongs to the SAPS family. As to quaternary structure, interacts with ppe1 and mis12.

It localises to the nucleus. Its function is as follows. Has a role in chromosome segregation. May provide a dynamic connection between kinetochore microtubules and kinetochore chromatin. This chain is Extragenic suppressor of kinetochore protein 1 (ekc1), found in Schizosaccharomyces pombe (strain 972 / ATCC 24843) (Fission yeast).